The sequence spans 122 residues: Histone H2B.1 (122 aa).

A compositionally biased stretch (low complexity) spans 1 to 10 (MAPKKAPAAA). The segment at 1–28 (MAPKKAPAAAAEKKVKKAPTTEKKNKKK) is disordered. Residue Ala-2 is modified to N,N,N-trimethylalanine. N6-acetyllysine occurs at positions 5 and 42. A Glycyl lysine isopeptide (Lys-Gly) (interchain with G-Cter in ubiquitin) cross-link involves residue Lys-116.

It belongs to the histone H2B family. As to quaternary structure, the nucleosome is a histone octamer containing two molecules each of H2A, H2B, H3 and H4 assembled in one H3-H4 heterotetramer and two H2A-H2B heterodimers. The octamer wraps approximately 147 bp of DNA. Acetylation occurs almost exclusively in the MAC. Post-translationally, monoubiquitination to form H2BK115ub1 gives a specific tag for epigenetic transcriptional activation and is also prerequisite for H3K4me and H3K79me formation.

It localises to the nucleus. The protein resides in the chromosome. Its function is as follows. Core component of nucleosome. Nucleosomes wrap and compact DNA into chromatin, limiting DNA accessibility to the cellular machineries which require DNA as a template. Histones thereby play a central role in transcription regulation, DNA repair, DNA replication and chromosomal stability. DNA accessibility is regulated via a complex set of post-translational modifications of histones, also called histone code, and nucleosome remodeling. The polypeptide is Histone H2B.1 (HTB1) (Tetrahymena thermophila (strain SB210)).